Consider the following 80-residue polypeptide: uncharacterized protein (80 aa).

The first 20 residues, 1 to 20 (MVAADHRALGSNKSYPASQT), serve as a signal peptide directing secretion. The segment at 1–21 (MVAADHRALGSNKSYPASQTA) is disordered. The span at 11–21 (SNKSYPASQTA) shows a compositional bias: polar residues.

This is an uncharacterized protein from Mycobacterium tuberculosis (strain CDC 1551 / Oshkosh).